The primary structure comprises 162 residues: Large ribosomal subunit protein eL24 (162 aa).

Disordered stretches follow at residues 64-83 and 117-162; these read DIHA…PYSR and ERIK…GGKR. Residues 71–81 show a composition bias toward basic residues; that stretch reads KKRRRTTKKPY. A compositionally biased stretch (basic and acidic residues) spans 117–135; it reads ERIKKTKDEKKAKKAEVTK.

The protein belongs to the eukaryotic ribosomal protein eL24 family.

Its subcellular location is the cytoplasm. The sequence is that of Large ribosomal subunit protein eL24 (RPL24) from Hordeum vulgare (Barley).